The chain runs to 351 residues: Succinylglutamate desuccinylase (351 aa).

Zn(2+)-binding residues include histidine 73, glutamate 76, and histidine 168. Residue glutamate 231 is part of the active site.

Belongs to the AspA/AstE family. Succinylglutamate desuccinylase subfamily. The cofactor is Zn(2+).

It catalyses the reaction N-succinyl-L-glutamate + H2O = L-glutamate + succinate. Its pathway is amino-acid degradation; L-arginine degradation via AST pathway; L-glutamate and succinate from L-arginine: step 5/5. In terms of biological role, transforms N(2)-succinylglutamate into succinate and glutamate. The chain is Succinylglutamate desuccinylase from Burkholderia lata (strain ATCC 17760 / DSM 23089 / LMG 22485 / NCIMB 9086 / R18194 / 383).